We begin with the raw amino-acid sequence, 384 residues long: MTAIPLGLPGVPVRPIAERRVSRRIQVGPVAVGGGAPVSVQSMTTTRTSDIGATLQQIAELTASGCQIVRVACPTQDDADALPVIARKSQIPVIADIHFQPKYVFAAIEAGCAAVRVNPGNIKQFDDKVKEIAKAAKDHGTPIRIGVNAGSLDRRLLQKYGRATPEALAESALWEASLFEEHDFRDIKISVKHNDPVVMVEAYRQLAAQCDYPLHLGVTEAGPAFQGTIKSAVAFGALLSQGIGDTIRVSLSTPPVEEIKVGIQILESLNLRQRGLEIVSCPSCGRAQVDVYKLAEEVTAGLEGMEVPLRVAVMGCVVNGPGEAREADLGVASGNGKGQIFVKGEVVKTVPESKIVETLIEEAMRIAEQMEKDGASGAPAVTVS.

4 residues coordinate [4Fe-4S] cluster: C281, C284, C316, and E323.

It belongs to the IspG family. The cofactor is [4Fe-4S] cluster.

It catalyses the reaction (2E)-4-hydroxy-3-methylbut-2-enyl diphosphate + oxidized [flavodoxin] + H2O + 2 H(+) = 2-C-methyl-D-erythritol 2,4-cyclic diphosphate + reduced [flavodoxin]. It participates in isoprenoid biosynthesis; isopentenyl diphosphate biosynthesis via DXP pathway; isopentenyl diphosphate from 1-deoxy-D-xylulose 5-phosphate: step 5/6. Its function is as follows. Converts 2C-methyl-D-erythritol 2,4-cyclodiphosphate (ME-2,4cPP) into 1-hydroxy-2-methyl-2-(E)-butenyl 4-diphosphate. This Streptomyces coelicolor (strain ATCC BAA-471 / A3(2) / M145) protein is 4-hydroxy-3-methylbut-2-en-1-yl diphosphate synthase (flavodoxin) 1.